A 505-amino-acid chain; its full sequence is Flagellin (505 aa).

This sequence belongs to the bacterial flagellin family.

It localises to the secreted. Its subcellular location is the bacterial flagellum. Functionally, flagellin is the subunit protein which polymerizes to form the filaments of bacterial flagella. In Salmonella budapest, this protein is Flagellin (fliC).